The chain runs to 251 residues: uncharacterized protein (251 aa).

Disordered regions lie at residues 1–92 and 137–251; these read MGRP…PGSA and KPTP…LRTH. Low complexity predominate over residues 69–92; it reads AEGAPALLGGSPSSGSPGHPPGSA. The span at 155–172 shows a compositional bias: polar residues; that stretch reads SESSWQLPQLPAGSTSGS.

This is an uncharacterized protein from Homo sapiens (Human).